A 232-amino-acid polypeptide reads, in one-letter code: Ras-related protein RabP (232 aa).

A GTP-binding site is contributed by 15-22 (GNYGVGKS). The Effector region motif lies at 35–40 (DNTTGF). Residues 58–62 (DTSGQ) and 118–121 (NKFD) contribute to the GTP site. 2 S-geranylgeranyl cysteine lipidation sites follow: Cys-229 and Cys-230.

Belongs to the small GTPase superfamily. Rab family.

It is found in the cell membrane. The protein is Ras-related protein RabP (rabP) of Dictyostelium discoideum (Social amoeba).